The chain runs to 321 residues: Hex-5-enoyl-[acyl-carrier protein] acetylenase (321 aa).

A run of 2 helical transmembrane segments spans residues phenylalanine 36–tryptophan 56 and valine 62–leucine 82. Residues histidine 83–histidine 88 carry the Histidine box-1 motif. Residues valine 99 to valine 119 form a helical membrane-spanning segment. The Histidine box-2 signature appears at histidine 120–histidine 124. A helical membrane pass occupies residues tyrosine 188–glycine 208. The Histidine box-3 signature appears at glutamine 269 to histidine 273.

This sequence belongs to the fatty acid desaturase type 2 family. Fe(2+) is required as a cofactor.

It is found in the membrane. The catalysed reaction is 5-hexenoyl-[ACP] + 2 reduced [2Fe-2S]-[ferredoxin] + O2 + 2 H(+) = 5-hexynoyl-[ACP] + 2 oxidized [2Fe-2S]-[ferredoxin] + 2 H2O. It catalyses the reaction hexanoyl-[ACP] + 2 reduced [2Fe-2S]-[ferredoxin] + O2 + 2 H(+) = 5-hexenoyl-[ACP] + 2 oxidized [2Fe-2S]-[ferredoxin] + 2 H2O. In terms of biological role, desaturase involved in the biosynthesis of jamaicamides, which show sodium channel blocking activity and fish toxicity. Catalyzes the conversion of 5-hexenoyl loaded onto the acyl carrier protein JamC (5-hexenoyl-JamC) to 5-hexynoyl-JamC. Can also catalyze the conversion of hexanoyl-JamC to 5-hexenoyl-JamC, but it cannot use free 5-hexenoic acid, 5-hexenoyl-CoA, 2-hexenoyl-JamC, 3-hexenoyl-JamC or 4-hexenoyl-JamC. Is specific for C(6) chains, and cannot use 4-pentenoyl-JamC, 6-heptenoyl-JamC or 7-octenoyl-JamC as substrate. This chain is Hex-5-enoyl-[acyl-carrier protein] acetylenase, found in Moorena producens (strain JHB).